The primary structure comprises 260 residues: UPF0246 protein Cbei_1739 (260 aa).

It belongs to the UPF0246 family.

The sequence is that of UPF0246 protein Cbei_1739 from Clostridium beijerinckii (strain ATCC 51743 / NCIMB 8052) (Clostridium acetobutylicum).